Here is a 522-residue protein sequence, read N- to C-terminus: Probable cytosolic Fe-S cluster assembly factor narfl (522 aa).

8 residues coordinate [4Fe-4S] cluster: C26, C73, C76, C79, C205, C281, C439, and C443.

This sequence belongs to the NARF family.

Its function is as follows. Component of the cytosolic iron-sulfur (Fe/S) protein assembly machinery. Required for maturation of extramitochondrial Fe/S proteins. This chain is Probable cytosolic Fe-S cluster assembly factor narfl (narfl), found in Dictyostelium discoideum (Social amoeba).